A 155-amino-acid chain; its full sequence is Transcriptional repressor NrdR (155 aa).

The segment at 3–34 is a zinc-finger region; that stretch reads CPFCGHSNTQVLDTRMSEDGDAVRRRRRCEAC. Positions 49 to 139 constitute an ATP-cone domain; the sequence is PAIVKKNGSR…VYRSFEDVSE (91 aa).

The protein belongs to the NrdR family. Requires Zn(2+) as cofactor.

Functionally, negatively regulates transcription of bacterial ribonucleotide reductase nrd genes and operons by binding to NrdR-boxes. The polypeptide is Transcriptional repressor NrdR (Cupriavidus necator (strain ATCC 17699 / DSM 428 / KCTC 22496 / NCIMB 10442 / H16 / Stanier 337) (Ralstonia eutropha)).